The following is a 500-amino-acid chain: Glutamyl-tRNA(Gln) amidotransferase subunit A (500 aa).

Residues Lys-81 and Ser-161 each act as charge relay system in the active site. Ser-185 serves as the catalytic Acyl-ester intermediate.

The protein belongs to the amidase family. GatA subfamily. Heterotrimer of A, B and C subunits.

It catalyses the reaction L-glutamyl-tRNA(Gln) + L-glutamine + ATP + H2O = L-glutaminyl-tRNA(Gln) + L-glutamate + ADP + phosphate + H(+). Functionally, allows the formation of correctly charged Gln-tRNA(Gln) through the transamidation of misacylated Glu-tRNA(Gln) in organisms which lack glutaminyl-tRNA synthetase. The reaction takes place in the presence of glutamine and ATP through an activated gamma-phospho-Glu-tRNA(Gln). The chain is Glutamyl-tRNA(Gln) amidotransferase subunit A from Rhodospirillum rubrum (strain ATCC 11170 / ATH 1.1.1 / DSM 467 / LMG 4362 / NCIMB 8255 / S1).